The chain runs to 122 residues: Ribosome-binding factor A (122 aa).

It belongs to the RbfA family. Monomer. Binds 30S ribosomal subunits, but not 50S ribosomal subunits or 70S ribosomes.

The protein localises to the cytoplasm. In terms of biological role, one of several proteins that assist in the late maturation steps of the functional core of the 30S ribosomal subunit. Associates with free 30S ribosomal subunits (but not with 30S subunits that are part of 70S ribosomes or polysomes). Required for efficient processing of 16S rRNA. May interact with the 5'-terminal helix region of 16S rRNA. The protein is Ribosome-binding factor A of Geotalea uraniireducens (strain Rf4) (Geobacter uraniireducens).